A 156-amino-acid polypeptide reads, in one-letter code: Urease accessory protein UreE (156 aa).

The disordered stretch occupies residues 133-156 (RPESGAYGSGRTMGHDHGPFHVHA). The segment covering 145 to 156 (MGHDHGPFHVHA) has biased composition (basic and acidic residues).

This sequence belongs to the UreE family.

It is found in the cytoplasm. Its function is as follows. Involved in urease metallocenter assembly. Binds nickel. Probably functions as a nickel donor during metallocenter assembly. In Rhodobacter capsulatus (Rhodopseudomonas capsulata), this protein is Urease accessory protein UreE.